The chain runs to 417 residues: Transmembrane protease serine 11G (417 aa).

At 1–21 the chain is on the cytoplasmic side; it reads MYQPGILVRRKRVWKPWTVAL. The helical; Signal-anchor for type II membrane protein transmembrane segment at 22-42 threads the bilayer; it reads ITVALLLALAVLIGLLVYFLV. The Extracellular portion of the chain corresponds to 43–417; the sequence is YDEKTHYYQA…RDWIKSKTSI (375 aa). In terms of domain architecture, SEA spans 46-165; it reads KTHYYQASFW…PYLREMNAAQ (120 aa). Asn-60 carries N-linked (GlcNAc...) asparagine glycosylation. The region spanning 186–416 is the Peptidase S1 domain; the sequence is IADGKPADKA…YRDWIKSKTS (231 aa). An intrachain disulfide couples Cys-211 to Cys-227. Catalysis depends on charge relay system residues His-226 and Asp-271. Cystine bridges form between Cys-336–Cys-352 and Cys-363–Cys-392. The active-site Charge relay system is Ser-367.

This sequence belongs to the peptidase S1 family.

Its subcellular location is the membrane. The chain is Transmembrane protease serine 11G (Tmprss11g) from Mus musculus (Mouse).